The sequence spans 418 residues: Serine--tRNA ligase (418 aa).

232-234 (TAE) serves as a coordination point for L-serine. Residues 263-265 (RRE) and valine 279 each bind ATP. Glutamate 286 contacts L-serine. An ATP-binding site is contributed by 350 to 353 (EISS). Serine 385 is a binding site for L-serine.

It belongs to the class-II aminoacyl-tRNA synthetase family. Type-1 seryl-tRNA synthetase subfamily. Homodimer. The tRNA molecule binds across the dimer.

It localises to the cytoplasm. It carries out the reaction tRNA(Ser) + L-serine + ATP = L-seryl-tRNA(Ser) + AMP + diphosphate + H(+). It catalyses the reaction tRNA(Sec) + L-serine + ATP = L-seryl-tRNA(Sec) + AMP + diphosphate + H(+). It functions in the pathway aminoacyl-tRNA biosynthesis; selenocysteinyl-tRNA(Sec) biosynthesis; L-seryl-tRNA(Sec) from L-serine and tRNA(Sec): step 1/1. Its function is as follows. Catalyzes the attachment of serine to tRNA(Ser). Is also able to aminoacylate tRNA(Sec) with serine, to form the misacylated tRNA L-seryl-tRNA(Sec), which will be further converted into selenocysteinyl-tRNA(Sec). The chain is Serine--tRNA ligase from Leptospira biflexa serovar Patoc (strain Patoc 1 / Ames).